Consider the following 551-residue polypeptide: Palmdelphin (551 aa).

M1 carries the N-acetylmethionine modification. Positions 12–106 (QAITDKRKIQ…LQISANEEAI (95 aa)) form a coiled coil. K125 participates in a covalent cross-link: Glycyl lysine isopeptide (Lys-Gly) (interchain with G-Cter in SUMO2). S135 bears the Phosphoserine mark. A Glycyl lysine isopeptide (Lys-Gly) (interchain with G-Cter in SUMO1); alternate cross-link involves residue K178. Residue K178 forms a Glycyl lysine isopeptide (Lys-Gly) (interchain with G-Cter in SUMO2); alternate linkage. A compositionally biased stretch (basic and acidic residues) spans 247–258 (ERNSKSPTEYHE). Positions 247–266 (ERNSKSPTEYHEPVYANPFC) are disordered. The residue at position 270 (T270) is a Phosphothreonine. Disordered regions lie at residues 294 to 390 (LGNH…TCQE) and 451 to 533 (AEDN…GTED). Phosphoserine is present on residues S321 and S349. The segment covering 341–353 (HTQQKRMASPWEE) has biased composition (polar residues). Positions 354–365 (SSNRQNEHEVSP) are enriched in basic and acidic residues. Residues S370, S375, S384, S385, S498, S515, and S520 each carry the phosphoserine modification.

It belongs to the paralemmin family. As to quaternary structure, interacts with GLUL. In terms of processing, phosphorylated. Ubiquitous. Expressed at highest levels in the heart and lung.

The protein localises to the cytoplasm. It is found in the cell projection. Its subcellular location is the dendrite. The protein resides in the dendritic spine. The protein is Palmdelphin (Palmd) of Mus musculus (Mouse).